Here is a 211-residue protein sequence, read N- to C-terminus: Large ribosomal subunit protein uL3 (211 aa).

An N5-methylglutamine modification is found at Gln-150.

The protein belongs to the universal ribosomal protein uL3 family. As to quaternary structure, part of the 50S ribosomal subunit. Forms a cluster with proteins L14 and L19. In terms of processing, methylated by PrmB.

Functionally, one of the primary rRNA binding proteins, it binds directly near the 3'-end of the 23S rRNA, where it nucleates assembly of the 50S subunit. This is Large ribosomal subunit protein uL3 from Pseudomonas fluorescens (strain Pf0-1).